Reading from the N-terminus, the 170-residue chain is Photosystem II extrinsic protein V (170 aa).

A signal peptide spans 1–33 (MASLFASLGRSLIKLLIVLPVIIGLSISSPAMA). The heme c site is built by cysteine 70, cysteine 73, histidine 74, and histidine 125.

The protein belongs to the cytochrome c family. PsbV subfamily. In terms of assembly, PSII is composed of 1 copy each of membrane proteins PsbA, PsbB, PsbC, PsbD, PsbE, PsbF, PsbH, PsbI, PsbJ, PsbK, PsbL, PsbM, PsbT, PsbX, PsbY, Psb30/Ycf12, peripheral proteins PsbO, CyanoQ (PsbQ), PsbU, PsbV and a large number of cofactors. It forms dimeric complexes. It depends on heme c as a cofactor.

The protein localises to the cellular thylakoid membrane. Its function is as follows. One of the extrinsic, lumenal subunits of photosystem II (PSII). PSII is a light-driven water plastoquinone oxidoreductase, using light energy to abstract electrons from H(2)O, generating a proton gradient subsequently used for ATP formation. The extrinsic proteins stabilize the structure of photosystem II oxygen-evolving complex (OEC), the ion environment of oxygen evolution and protect the OEC against heat-induced inactivation. Low-potential cytochrome c that plays a role in the OEC of PSII. This Prochlorococcus marinus (strain MIT 9303) protein is Photosystem II extrinsic protein V.